We begin with the raw amino-acid sequence, 103 residues long: Large ribosomal subunit protein bL21 (103 aa).

It belongs to the bacterial ribosomal protein bL21 family. Part of the 50S ribosomal subunit. Contacts protein L20.

In terms of biological role, this protein binds to 23S rRNA in the presence of protein L20. The sequence is that of Large ribosomal subunit protein bL21 from Lactobacillus johnsonii (strain CNCM I-12250 / La1 / NCC 533).